Consider the following 298-residue polypeptide: Glycine--tRNA ligase alpha subunit (298 aa).

This sequence belongs to the class-II aminoacyl-tRNA synthetase family. Tetramer of two alpha and two beta subunits.

The protein localises to the cytoplasm. It catalyses the reaction tRNA(Gly) + glycine + ATP = glycyl-tRNA(Gly) + AMP + diphosphate. In Helicobacter acinonychis (strain Sheeba), this protein is Glycine--tRNA ligase alpha subunit.